The sequence spans 312 residues: Malate dehydrogenase (312 aa).

Residues 7–13 (GAAGGIG) and aspartate 34 contribute to the NAD(+) site. Residues arginine 81 and arginine 87 each coordinate substrate. NAD(+)-binding positions include asparagine 94 and 117–119 (ITN). 2 residues coordinate substrate: asparagine 119 and arginine 153. The Proton acceptor role is filled by histidine 177. Residue methionine 227 participates in NAD(+) binding.

The protein belongs to the LDH/MDH superfamily. MDH type 1 family. In terms of assembly, homodimer.

The enzyme catalyses (S)-malate + NAD(+) = oxaloacetate + NADH + H(+). Functionally, catalyzes the reversible oxidation of malate to oxaloacetate. This is Malate dehydrogenase from Escherichia fergusonii (strain ATCC 35469 / DSM 13698 / CCUG 18766 / IAM 14443 / JCM 21226 / LMG 7866 / NBRC 102419 / NCTC 12128 / CDC 0568-73).